A 268-amino-acid chain; its full sequence is Tryptophan synthase alpha chain (268 aa).

Residues E49 and D60 each act as proton acceptor in the active site.

This sequence belongs to the TrpA family. As to quaternary structure, tetramer of two alpha and two beta chains.

It catalyses the reaction (1S,2R)-1-C-(indol-3-yl)glycerol 3-phosphate + L-serine = D-glyceraldehyde 3-phosphate + L-tryptophan + H2O. It functions in the pathway amino-acid biosynthesis; L-tryptophan biosynthesis; L-tryptophan from chorismate: step 5/5. In terms of biological role, the alpha subunit is responsible for the aldol cleavage of indoleglycerol phosphate to indole and glyceraldehyde 3-phosphate. The chain is Tryptophan synthase alpha chain from Erwinia tasmaniensis (strain DSM 17950 / CFBP 7177 / CIP 109463 / NCPPB 4357 / Et1/99).